Consider the following 122-residue polypeptide: MVRGIRGAITVEEDTPEAIHQATRELLLKMLEANGIQSYEELAAVIFTVTEDLTSAFPAEAARQIGMHRVPLLSAREVPVPGSLPRVIRVLALWNTDTPQDRVRHVYLREAVRLRPDLESAQ.

The Chorismate mutase aroH-type domain occupies 2–120 (VRGIRGAITV…AVRLRPDLES (119 aa)). Prephenate-binding residues include R6, R89, and Y107.

As to quaternary structure, homotrimer.

The protein localises to the cytoplasm. It catalyses the reaction chorismate = prephenate. The protein operates within metabolic intermediate biosynthesis; prephenate biosynthesis; prephenate from chorismate: step 1/1. Its activity is regulated as follows. Inhibited by 40% with 500 uM tyrosine, and a tyrosine concentration as high as 5 mM reduced activity to 5%. In terms of biological role, catalyzes the Claisen rearrangement of chorismate to prephenate. Probably involved in the aromatic amino acid biosynthesis. The chain is Chorismate mutase AroH from Thermus thermophilus.